The following is a 1039-amino-acid chain: uncharacterized protein (1039 aa).

This is an uncharacterized protein from Treponema pallidum (strain Nichols).